A 922-amino-acid chain; its full sequence is Putative ATP-dependent helicase/translocase YwqA (922 aa).

The region spanning 462 to 625 is the Helicase ATP-binding domain; the sequence is LFLRESGFGA…WSIFDFMNKG (164 aa). Position 475-482 (475-482) interacts with ATP; that stretch reads DDMGLGKT. A DEAQ box motif is present at residues 576–579; sequence DEAQ. The region spanning 753–907 is the Helicase C-terminal domain; the sequence is KLLELMTAIR…QSENWITELS (155 aa).

It belongs to the SNF2/RAD54 helicase family. Interacts with the RNA polymerase core.

The chain is Putative ATP-dependent helicase/translocase YwqA (ywqA) from Bacillus subtilis (strain 168).